We begin with the raw amino-acid sequence, 304 residues long: D-tagatose-1-phosphate kinase (304 aa).

Asp250 serves as the catalytic Proton acceptor.

It belongs to the carbohydrate kinase PfkB family. The cofactor is Mg(2+).

The enzyme catalyses alpha-D-tagatopyranose 1-phosphate + ATP = D-tagatofuranose 1,6-bisphosphate + ADP + H(+). It functions in the pathway carbohydrate degradation. Functionally, kinase involved in a D-tagatose catabolic pathway. Catalyzes the phosphorylation of D-tagatose-1-phosphate (Tag-1P) to D-tagatose-1,6-bisphosphate. The protein is D-tagatose-1-phosphate kinase of Klebsiella oxytoca.